A 439-amino-acid chain; its full sequence is Elongation factor Tu, mitochondrial (439 aa).

Positions 51 to 246 constitute a tr-type G domain; that stretch reads KPHVNIGTIG…AVDSYITLPE (196 aa). Residues 60–67 are G1; that stretch reads GHVDHGKT. 60–67 serves as a coordination point for GTP; sequence GHVDHGKT. Positions 101-105 are G2; sequence GITIS. Residues 122–125 form a G3 region; it reads DCPG. GTP contacts are provided by residues 122 to 126 and 177 to 180; these read DCPGH and NKVD. The G4 stretch occupies residues 177–180; that stretch reads NKVD. The segment at 214-216 is G5; that stretch reads SAL.

Belongs to the TRAFAC class translation factor GTPase superfamily. Classic translation factor GTPase family. EF-Tu/EF-1A subfamily.

The protein localises to the mitochondrion. Its function is as follows. This protein promotes the GTP-dependent binding of aminoacyl-tRNA to the A-site of ribosomes during protein biosynthesis. In Schizosaccharomyces pombe (strain 972 / ATCC 24843) (Fission yeast), this protein is Elongation factor Tu, mitochondrial (tuf1).